We begin with the raw amino-acid sequence, 125 residues long: Ixonnexin (125 aa).

The N-terminal stretch at 1 to 21 is a signal peptide; that stretch reads MGLTGTTLVLVCVAFFGSAAA. N-linked (GlcNAc...) asparagine glycosylation occurs at Asn26. Residues 81–125 are disordered; that stretch reads TSSGGPDDTGDNTPPPTEKPKQKKKKPKKTKKPKRKSKKDQKENF. Over residues 101-119 the composition is skewed to basic residues; that stretch reads KQKKKKPKKTKKPKRKSKK.

It belongs to the salp14 family. Homodimer. Interacts with host PLG. Interacts with host PLAT. In terms of tissue distribution, saliva (at protein level).

It is found in the secreted. Functionally, salivary protein that promotes host fibrinolysis via accelerating host plasmin generation from plasminogen (PLG) initiated by tPA/tissue-type plasminogen activator (PLAT). Does not affect urokinase (PLAU)-mediated fibrinolysis in the host. Enhances amidolytic activity of host coagulation factor Xa (F10). The protein is Ixonnexin of Ixodes scapularis (Black-legged tick).